A 253-amino-acid polypeptide reads, in one-letter code: Retinoic acid early-inducible protein 1-beta (253 aa).

The N-terminal stretch at 1 to 28 (MAKAAVTKRHHFMIQKLLILLSYGYTNG) is a signal peptide. Cys37 and Cys56 are disulfide-bonded. N-linked (GlcNAc...) asparagine glycans are attached at residues Asn38, Asn70, Asn83, Asn143, and Asn156. A disulfide bridge connects residues Cys90 and Cys190. The interval 198–230 (LKQSKEKPRSTSRSPSITQLTSTSPLPPPSHST) is disordered. A compositionally biased stretch (low complexity) spans 211-221 (SPSITQLTSTS). Ser229 is lipidated: GPI-anchor amidated serine. Positions 230–253 (TSKKGFISVGLIFISLLFAFAFAM) are cleaved as a propeptide — removed in mature form.

It belongs to the NKG2D ligand family. Post-translationally, glycosylated. Expressed predominantly in embryonic brain.

The protein resides in the cell membrane. Functionally, acts as a ligand for KLRK1. This Mus musculus (Mouse) protein is Retinoic acid early-inducible protein 1-beta (Raet1b).